Consider the following 1588-residue polypeptide: Pentafunctional AROM polypeptide (1588 aa).

The tract at residues 1-392 is 3-dehydroquinate synthase; sequence MVQLAKVPIL…YGDSAQFVSD (392 aa). NAD(+)-binding positions include 43–45, 78–81, 109–111, and Asp114; these read DTN, ETSK, and GGV. Arg125 serves as a coordination point for 7-phospho-2-dehydro-3-deoxy-D-arabino-heptonate. Residue 134–135 coordinates NAD(+); it reads TS. 7-phospho-2-dehydro-3-deoxy-D-arabino-heptonate contacts are provided by Asp141 and Lys147. Lys156 is a binding site for NAD(+). Asn157 is a binding site for 7-phospho-2-dehydro-3-deoxy-D-arabino-heptonate. NAD(+) is bound by residues 174-177 and Asn185; that span reads WLET. Zn(2+) is bound at residue Glu189. 7-phospho-2-dehydro-3-deoxy-D-arabino-heptonate-binding positions include 189–192 and Lys258; that span reads EVIK. Catalysis depends on Glu268, which acts as the Proton acceptor; for 3-dehydroquinate synthase activity. 7-phospho-2-dehydro-3-deoxy-D-arabino-heptonate contacts are provided by residues 272–276 and His279; that span reads RNLLN. His279 lines the Zn(2+) pocket. His283 serves as the catalytic Proton acceptor; for 3-dehydroquinate synthase activity. 7-phospho-2-dehydro-3-deoxy-D-arabino-heptonate contacts are provided by His295 and Lys364. His295 lines the Zn(2+) pocket. An EPSP synthase region spans residues 405-871; the sequence is VYPFKDIPAD…WDVLHSELGA (467 aa). The active-site For EPSP synthase activity is the Cys853. The segment at 890-1080 is shikimate kinase; that stretch reads SVVIIGMRAA…IPSGRSAFVC (191 aa). 895-902 contacts ATP; that stretch reads GMRAAGKT. Residues 1081-1293 form a 3-dehydroquinase region; sequence LTFDDLTEQT…AAPGQLTVAQ (213 aa). Catalysis depends on His1198, which acts as the Proton acceptor; for 3-dehydroquinate dehydratase activity. Catalysis depends on Lys1227, which acts as the Schiff-base intermediate with substrate; for 3-dehydroquinate dehydratase activity. The shikimate dehydrogenase stretch occupies residues 1306-1588; sequence PKELFVVGKP…KAIFDAVTKE (283 aa).

In the N-terminal section; belongs to the sugar phosphate cyclases superfamily. Dehydroquinate synthase family. The protein in the 2nd section; belongs to the EPSP synthase family. This sequence in the 3rd section; belongs to the shikimate kinase family. It in the 4th section; belongs to the type-I 3-dehydroquinase family. In the C-terminal section; belongs to the shikimate dehydrogenase family. In terms of assembly, homodimer. The cofactor is Zn(2+).

Its subcellular location is the cytoplasm. The enzyme catalyses 7-phospho-2-dehydro-3-deoxy-D-arabino-heptonate = 3-dehydroquinate + phosphate. It catalyses the reaction 3-dehydroquinate = 3-dehydroshikimate + H2O. It carries out the reaction shikimate + NADP(+) = 3-dehydroshikimate + NADPH + H(+). The catalysed reaction is shikimate + ATP = 3-phosphoshikimate + ADP + H(+). The enzyme catalyses 3-phosphoshikimate + phosphoenolpyruvate = 5-O-(1-carboxyvinyl)-3-phosphoshikimate + phosphate. It participates in metabolic intermediate biosynthesis; chorismate biosynthesis; chorismate from D-erythrose 4-phosphate and phosphoenolpyruvate: step 2/7. Its pathway is metabolic intermediate biosynthesis; chorismate biosynthesis; chorismate from D-erythrose 4-phosphate and phosphoenolpyruvate: step 3/7. The protein operates within metabolic intermediate biosynthesis; chorismate biosynthesis; chorismate from D-erythrose 4-phosphate and phosphoenolpyruvate: step 4/7. It functions in the pathway metabolic intermediate biosynthesis; chorismate biosynthesis; chorismate from D-erythrose 4-phosphate and phosphoenolpyruvate: step 5/7. It participates in metabolic intermediate biosynthesis; chorismate biosynthesis; chorismate from D-erythrose 4-phosphate and phosphoenolpyruvate: step 6/7. The AROM polypeptide catalyzes 5 consecutive enzymatic reactions in prechorismate polyaromatic amino acid biosynthesis. The polypeptide is Pentafunctional AROM polypeptide (Saccharomyces cerevisiae (strain ATCC 204508 / S288c) (Baker's yeast)).